The sequence spans 78 residues: Exodeoxyribonuclease 7 small subunit (78 aa).

It belongs to the XseB family. As to quaternary structure, heterooligomer composed of large and small subunits.

It localises to the cytoplasm. It carries out the reaction Exonucleolytic cleavage in either 5'- to 3'- or 3'- to 5'-direction to yield nucleoside 5'-phosphates.. Its function is as follows. Bidirectionally degrades single-stranded DNA into large acid-insoluble oligonucleotides, which are then degraded further into small acid-soluble oligonucleotides. This Desulfitobacterium hafniense (strain Y51) protein is Exodeoxyribonuclease 7 small subunit.